Consider the following 606-residue polypeptide: DNA mismatch repair protein MutL (606 aa).

The tract at residues 377 to 401 is disordered; it reads HRPLFAPQPAPQPDREPPLPDSGSR.

It belongs to the DNA mismatch repair MutL/HexB family.

In terms of biological role, this protein is involved in the repair of mismatches in DNA. It is required for dam-dependent methyl-directed DNA mismatch repair. May act as a 'molecular matchmaker', a protein that promotes the formation of a stable complex between two or more DNA-binding proteins in an ATP-dependent manner without itself being part of a final effector complex. The sequence is that of DNA mismatch repair protein MutL from Geobacter sulfurreducens (strain ATCC 51573 / DSM 12127 / PCA).